A 159-amino-acid chain; its full sequence is MPKFYCDYCDTYLTHDSPSVRKTHCSGRKHKENVKDYYQKWMEEQAQSLIDKTTAAFQQGKIPPTPFPGAPPPGGSLLPHPSIGGPPRPGMLPAPPMGGPPMMPMMGPPPHAMMPGGPGPGMRPPMGGPMQMMPGPHMMRPPARPMMPAVRPGMVRPDR.

The Matrin-type zinc finger occupies 4–36 (FYCDYCDTYLTHDSPSVRKTHCSGRKHKENVKD). The tract at residues 61-99 (KIPPTPFPGAPPPGGSLLPHPSIGGPPRPGMLPAPPMGG) is disordered. Composition is skewed to pro residues over residues 63 to 74 (PPTPFPGAPPPG) and 84 to 99 (GGPP…PMGG).

It belongs to the U1 small nuclear ribonucleoprotein C family. Component of the U1 snRNP. The U1 snRNP is composed of the U1 snRNA and the 7 core Sm proteins snrpb, snrpd1, snrpd2, snrpd3, snrpe, snrpf and snrpg that assemble in a heptameric protein ring on the Sm site of the small nuclear RNA to form the core snRNP, and at least 3 U1 snRNP-specific proteins snrnp70/U1-70K, snrpa/U1-A and snrpc/U1-C. snrpc/U1-C interacts with U1 snRNA and the 5' splice-site region of the pre-mRNA.

Its subcellular location is the nucleus. Functionally, component of the spliceosomal U1 snRNP, which is essential for recognition of the pre-mRNA 5' splice-site and the subsequent assembly of the spliceosome. snrpc/U1-C is directly involved in initial 5' splice-site recognition for both constitutive and regulated alternative splicing. The interaction with the 5' splice-site seems to precede base-pairing between the pre-mRNA and the U1 snRNA. Stimulates commitment or early (E) complex formation by stabilizing the base pairing of the 5' end of the U1 snRNA and the 5' splice-site region. The polypeptide is U1 small nuclear ribonucleoprotein C (Danio rerio (Zebrafish)).